Reading from the N-terminus, the 189-residue chain is Peptidyl-tRNA hydrolase (189 aa).

Tyr15 lines the tRNA pocket. His20 acts as the Proton acceptor in catalysis. Residues Tyr65, Asn67, and Asn113 each coordinate tRNA.

Belongs to the PTH family. In terms of assembly, monomer.

Its subcellular location is the cytoplasm. It catalyses the reaction an N-acyl-L-alpha-aminoacyl-tRNA + H2O = an N-acyl-L-amino acid + a tRNA + H(+). Hydrolyzes ribosome-free peptidyl-tRNAs (with 1 or more amino acids incorporated), which drop off the ribosome during protein synthesis, or as a result of ribosome stalling. Its function is as follows. Catalyzes the release of premature peptidyl moieties from peptidyl-tRNA molecules trapped in stalled 50S ribosomal subunits, and thus maintains levels of free tRNAs and 50S ribosomes. In Caldicellulosiruptor bescii (strain ATCC BAA-1888 / DSM 6725 / KCTC 15123 / Z-1320) (Anaerocellum thermophilum), this protein is Peptidyl-tRNA hydrolase.